A 95-amino-acid polypeptide reads, in one-letter code: Co-chaperonin GroES (95 aa).

Belongs to the GroES chaperonin family. In terms of assembly, heptamer of 7 subunits arranged in a ring. Interacts with the chaperonin GroEL.

The protein resides in the cytoplasm. Its function is as follows. Together with the chaperonin GroEL, plays an essential role in assisting protein folding. The GroEL-GroES system forms a nano-cage that allows encapsulation of the non-native substrate proteins and provides a physical environment optimized to promote and accelerate protein folding. GroES binds to the apical surface of the GroEL ring, thereby capping the opening of the GroEL channel. In Desulforapulum autotrophicum (strain ATCC 43914 / DSM 3382 / VKM B-1955 / HRM2) (Desulfobacterium autotrophicum), this protein is Co-chaperonin GroES.